A 117-amino-acid chain; its full sequence is Fluoride-specific ion channel FluC 2 (117 aa).

2 consecutive transmembrane segments (helical) span residues 1–21 and 46–66; these read MISIILVMIGGGFGAIARSAI and FLIGLTIGLSISISWFPAFFV. Na(+)-binding residues include Gly-71 and Thr-74. Residues 95–115 traverse the membrane as a helical segment; it reads LFLNYSLLQFIIGFIACYIGY.

This sequence belongs to the fluoride channel Fluc/FEX (TC 1.A.43) family.

The protein resides in the cell membrane. The catalysed reaction is fluoride(in) = fluoride(out). Na(+) is not transported, but it plays an essential structural role and its presence is essential for fluoride channel function. Functionally, fluoride-specific ion channel. Important for reducing fluoride concentration in the cell, thus reducing its toxicity. This is Fluoride-specific ion channel FluC 2 from Staphylococcus aureus (strain NCTC 8325 / PS 47).